A 511-amino-acid polypeptide reads, in one-letter code: ATP synthase subunit alpha 2 (511 aa).

An ATP-binding site is contributed by 173–180 (GDRQTGKS).

The protein belongs to the ATPase alpha/beta chains family. F-type ATPases have 2 components, CF(1) - the catalytic core - and CF(0) - the membrane proton channel. CF(1) has five subunits: alpha(3), beta(3), gamma(1), delta(1), epsilon(1). CF(0) has three main subunits: a(1), b(2) and c(9-12). The alpha and beta chains form an alternating ring which encloses part of the gamma chain. CF(1) is attached to CF(0) by a central stalk formed by the gamma and epsilon chains, while a peripheral stalk is formed by the delta and b chains.

The protein resides in the cell inner membrane. The catalysed reaction is ATP + H2O + 4 H(+)(in) = ADP + phosphate + 5 H(+)(out). Its function is as follows. Produces ATP from ADP in the presence of a proton gradient across the membrane. The alpha chain is a regulatory subunit. The polypeptide is ATP synthase subunit alpha 2 (Nitrosospira multiformis (strain ATCC 25196 / NCIMB 11849 / C 71)).